A 678-amino-acid polypeptide reads, in one-letter code: Glycine--tRNA ligase beta subunit (678 aa).

It belongs to the class-II aminoacyl-tRNA synthetase family. In terms of assembly, tetramer of two alpha and two beta subunits.

The protein localises to the cytoplasm. It catalyses the reaction tRNA(Gly) + glycine + ATP = glycyl-tRNA(Gly) + AMP + diphosphate. The chain is Glycine--tRNA ligase beta subunit from Streptococcus pneumoniae (strain Hungary19A-6).